A 203-amino-acid chain; its full sequence is A-type ATP synthase subunit E (203 aa).

This sequence belongs to the V-ATPase E subunit family. Has multiple subunits with at least A(3), B(3), C, D, E, F, H, I and proteolipid K(x).

The protein localises to the cell membrane. Component of the A-type ATP synthase that produces ATP from ADP in the presence of a proton gradient across the membrane. This chain is A-type ATP synthase subunit E, found in Thermococcus sibiricus (strain DSM 12597 / MM 739).